The sequence spans 190 residues: UPF0398 protein LAR_0869 (190 aa).

It belongs to the UPF0398 family.

The polypeptide is UPF0398 protein LAR_0869 (Limosilactobacillus reuteri subsp. reuteri (strain JCM 1112) (Lactobacillus reuteri)).